The sequence spans 118 residues: uncharacterized protein (118 aa).

Helical transmembrane passes span 12-32 (IISL…FATF), 39-59 (LMPH…SLFI), 63-83 (IIGY…CPTI), and 98-118 (SAHL…VILF).

The protein resides in the cell membrane. This is an uncharacterized protein from Methanocaldococcus jannaschii (strain ATCC 43067 / DSM 2661 / JAL-1 / JCM 10045 / NBRC 100440) (Methanococcus jannaschii).